A 312-amino-acid polypeptide reads, in one-letter code: Malate dehydrogenase (312 aa).

Residues 7–13 and D34 contribute to the NAD(+) site; that span reads GAAGGIG. Residues R81 and R87 each coordinate substrate. Residues N94 and 117–119 contribute to the NAD(+) site; that span reads ITN. 2 residues coordinate substrate: N119 and R153. H177 functions as the Proton acceptor in the catalytic mechanism. M227 contacts NAD(+).

It belongs to the LDH/MDH superfamily. MDH type 1 family. As to quaternary structure, homodimer.

The enzyme catalyses (S)-malate + NAD(+) = oxaloacetate + NADH + H(+). Functionally, catalyzes the reversible oxidation of malate to oxaloacetate. The chain is Malate dehydrogenase from Escherichia coli (strain 55989 / EAEC).